The primary structure comprises 211 residues: Thymidylate kinase (211 aa).

10-17 provides a ligand contact to ATP; it reads GGDGVGKS.

It belongs to the thymidylate kinase family.

It catalyses the reaction dTMP + ATP = dTDP + ADP. Its function is as follows. Phosphorylation of dTMP to form dTDP in both de novo and salvage pathways of dTTP synthesis. The polypeptide is Thymidylate kinase (Clavibacter sepedonicus (Clavibacter michiganensis subsp. sepedonicus)).